Consider the following 398-residue polypeptide: tRNA-specific 2-thiouridylase MnmA (398 aa).

Residues 33–40 and Met-59 contribute to the ATP site; that span reads GMSGGVDS. The interval 119 to 121 is interaction with target base in tRNA; that stretch reads NPD. The active-site Nucleophile is Cys-124. Cys-124 and Cys-226 are disulfide-bonded. An ATP-binding site is contributed by Gly-148. An interaction with tRNA region spans residues 176-178; sequence KDQ. Cys-226 serves as the catalytic Cysteine persulfide intermediate. The interval 343–344 is interaction with tRNA; it reads RY.

It belongs to the MnmA/TRMU family.

The protein localises to the cytoplasm. The catalysed reaction is S-sulfanyl-L-cysteinyl-[protein] + uridine(34) in tRNA + AH2 + ATP = 2-thiouridine(34) in tRNA + L-cysteinyl-[protein] + A + AMP + diphosphate + H(+). Functionally, catalyzes the 2-thiolation of uridine at the wobble position (U34) of tRNA, leading to the formation of s(2)U34. The polypeptide is tRNA-specific 2-thiouridylase MnmA (Psychrobacter sp. (strain PRwf-1)).